The sequence spans 361 residues: Homocitrate synthase (361 aa).

One can recognise a Pyruvate carboxyltransferase domain in the interval 1–249 (MILDSTLREG…VKKYRLDKLY (249 aa)). Arg-8 provides a ligand contact to 2-oxoglutarate. Position 9 (Glu-9) interacts with Mg(2+). His-68, Arg-128, and Thr-162 together coordinate 2-oxoglutarate. Mg(2+) contacts are provided by His-188 and His-190. The Proton acceptor role is filled by His-282.

Belongs to the alpha-IPM synthase/homocitrate synthase family. Homocitrate synthase LYS20/LYS21 subfamily. It depends on Mg(2+) as a cofactor. The cofactor is Mn(2+).

The catalysed reaction is acetyl-CoA + 2-oxoglutarate + H2O = (2R)-homocitrate + CoA + H(+). Its pathway is amino-acid biosynthesis; L-lysine biosynthesis via AAA pathway; L-alpha-aminoadipate from 2-oxoglutarate: step 1/5. Functionally, catalyzes the aldol-type condensation of 2-oxoglutarate with acetyl-CoA to yield homocitrate. Carries out the first step of the alpha-aminoadipate (AAA) lysine biosynthesis pathway. This Pyrococcus horikoshii (strain ATCC 700860 / DSM 12428 / JCM 9974 / NBRC 100139 / OT-3) protein is Homocitrate synthase.